Consider the following 1771-residue polypeptide: MMIDNNCGKEKVWVPNPEKGWINGDLIKEIPGEGWLVRDENGKEIKIEKDELRMQNPVIQEGIDDMTSLSHLHEAAVIHNLIKRYEINSIYTYTGSILIAINPYTKLPIYSKEMIESFCDQPVSKLAPHVYSIAESAYREMLNFQKNQSILVSGESGAGKTETTKFLLQYFAAMGEKGNGVNTSLISEEDIVEGNNIETQVIKSTPILEAFGNSKTLRNDNSSRFGKFIEIHFDKIKGTIVGAKLETYLLEKSRIVKPPENERGYHIFYQLIKGFNNSCCLKNSSNNNKDEDSSSSSNNNIDDLKSLLKCKASDFNYLISSGCDSIDGVDDSQVFIKTENALKVMGLSNDELIGIYKILLSILHIGNIEFEKGKEEDSSIIKYGNSSFGESFSDDDAGGYNPLEISCKLLGCSVDSLKSTFCSRKMKAGNESYTINHTVEQASQARDSLSMFLYSRLFDWLVVRINQSIDKIGTEKKDNSFLFIGILDIYGFESFESNSYEQFTINYANEKLQNQFNHQIFKLEQLEYEKEKIDWSYIEFSDNQECIDLIEKKPLGILSILDEESQFPKSTPSTLCTKLYNNHSKSKNFEKPRFSQTHFIIDHYAGKVEYDTNLFLEKNKDFIISEQVSALESSNWKFLTNLFQILSKKMNGGGGTSGGGGAGGNKASSSAAGKSTFKFTSVSSQFKESLNSLMTTINSTNPHYIRCIKPNTEKRANLFDNVMVLHQLRCSGVIEQLRISRSGYPSRLVYDNFIKRYKLIVAKDFKNDDDSNESKEWNSILKETDLNSSNGGTNNQIELKRKGAELMINKLSIDISSVQFGLTKLFFKSGIIANLELLRSQTMINSATFIQKIWRGYTDRKAYTSTKHSSIYFQSLIRSYLQQLEYNSMVEENSAIHLQSLIRTNELEKQFNQLLSTTIHFQSLLRRLEDSKEFNTLMDRIKKIVKIQSLWRSNLAKKQLKLLKAEAKSLTNVVAEKNKLASKLGDIQSKLDMESQLAQKIKNENEQLSSQFSNIQIEKEKLQKDFGNINLEKEELLLKYSALESEYHQYKQQNELIISKLKQHINDLEEKQHQHSYKNNEVVGNTSFEGSTTTNNGVTSPPKSSPASPIRNSINSNSDTTISGSSDDSIDNTDSLILSPKQHKGEDRKRNHEISSISPPRSRETIGHDDDDNNVDVIPRRQFNELEKEYKELKQMDETHKQYIESLKLQITQLEEKVKKSSSHPRSLLPGIPSNINDSPKVVYTKSSITNDNSSSHHQQQQQQHNISPSNSITSTTSPINMMDSNIKSLSYKDFTNSQEIDAQQQLHQYHLNNGTNPATSTTNGSGNPLSQSSPTGSDKHIQQSTISDLVSALNFNNCQLESGKYLVDLIIKNHDSIVSKYVPSEMGGIPEPAFILSRCFLKNIYDVDATVIGTPNSTNSGGGSGTGVLDPIETNVNILIYFCDKVEEVIYRDPKSNCSALCYWFSNFYTLFNIMETYNQDTKDQLSLNDQDKALIEKLKITLQTMIVKAHKNVVKNITDYIQPILHKSLNDTTSEIDFMDPITNYLNQIQISLSLENCYINNNLCKLLFEQLFSFINAMIFNEILLRKDLCCLRSSIPIKMNISELEHWVKLHHGKEWSSSVCDKLRLLKEVVYILMIDKTQLQNDELRDEICPTLSIAQLKQLLTMYSPDVDSFEDPIPLEILTSLMDSPKYNPDENILLDLSKIFTLKFINSNQTLSSSTSSENDLMATINLNALESVQYACDDLVSNIVKKNIEIVSLNNQKSIKK.

A Myosin N-terminal SH3-like domain is found at 7–57 (CGKEKVWVPNPEKGWINGDLIKEIPGEGWLVRDENGKEIKIEKDELRMQNP). In terms of domain architecture, Myosin motor spans 61-840 (EGIDDMTSLS…IIANLELLRS (780 aa)). An ATP-binding site is contributed by 154-161 (GESGAGKT). The interval 690 to 712 (LNSLMTTINSTNPHYIRCIKPNT) is actin-binding. IQ domains follow at residues 843–872 (MINS…SSIY), 866–895 (TKHS…ENSA), and 940–969 (RIKK…EAKS). 3 disordered regions span residues 1070-1176 (EKQH…NNVD), 1218-1282 (VKKS…PINM), and 1312-1343 (LNNG…KHIQ). A compositionally biased stretch (polar residues) spans 1077–1111 (YKNNEVVGNTSFEGSTTTNNGVTSPPKSSPASPIR). Low complexity predominate over residues 1112-1139 (NSINSNSDTTISGSSDDSIDNTDSLILS). Residues 1143 to 1153 (HKGEDRKRNHE) are compositionally biased toward basic and acidic residues. Residues 1180–1224 (RRQFNELEKEYKELKQMDETHKQYIESLKLQITQLEEKVKKSSSH) are a coiled coil. The span at 1253–1281 (NSSSHHQQQQQQHNISPSNSITSTTSPIN) shows a compositional bias: low complexity. The 269-residue stretch at 1427-1695 (TGVLDPIETN…LTSLMDSPKY (269 aa)) folds into the Dilute domain.

The protein belongs to the TRAFAC class myosin-kinesin ATPase superfamily. Myosin family. As to quaternary structure, myosin I heavy chain is single-headed. Dimer of a heavy and a light chain. Inability to self-assemble into filaments.

In terms of biological role, myosin is a protein that binds to actin and has ATPase activity that is activated by actin. In Dictyostelium discoideum (Social amoeba), this protein is Myosin-H heavy chain (myoH).